Reading from the N-terminus, the 155-residue chain is Glutaredoxin-related protein 5, mitochondrial (155 aa).

A mitochondrion-targeting transit peptide spans 1 to 14 (MNSVFRSTARCLRS). Residues 42 to 145 (QKNLEEMVKK…EELQKLGIRS (104 aa)) enclose the Glutaredoxin domain. Position 59 (K59) interacts with glutathione. C67 is a binding site for [2Fe-2S] cluster. Residues 97-101 (RQGIK), I109, and 122-123 (CD) each bind glutathione.

Homodimer.

It is found in the mitochondrion. In terms of biological role, monothiol glutaredoxin involved in mitochondrial iron-sulfur (Fe/S) cluster transfer. Receives iron-sulfur clusters from scaffold protein ISCU and mediates their transfer to apoproteins, to the 4Fe/FS cluster biosynthesis machinery, or export from mitochondrion. Required for normal hemoglobin biosynthesis. This is Glutaredoxin-related protein 5, mitochondrial (glrx5) from Danio rerio (Zebrafish).